Reading from the N-terminus, the 97-residue chain is MIPLMAKTGNYQVANVNVRNLPDEVHRAIRIQAALHGRSTEAEIRDILERAARPEGRVKLGSFLASIAREVGGLTDKEHTLFENTRITSPARAVSFE.

In terms of biological role, involved in plasmid stability. This chain is Plasmid stability protein StbC (stbC), found in Pseudomonas syringae pv. tomato (strain ATCC BAA-871 / DC3000).